A 400-amino-acid polypeptide reads, in one-letter code: Tryptophan synthase beta chain (400 aa).

Lys92 carries the post-translational modification N6-(pyridoxal phosphate)lysine.

It belongs to the TrpB family. As to quaternary structure, tetramer of two alpha and two beta chains. Pyridoxal 5'-phosphate is required as a cofactor.

It carries out the reaction (1S,2R)-1-C-(indol-3-yl)glycerol 3-phosphate + L-serine = D-glyceraldehyde 3-phosphate + L-tryptophan + H2O. It functions in the pathway amino-acid biosynthesis; L-tryptophan biosynthesis; L-tryptophan from chorismate: step 5/5. Its function is as follows. The beta subunit is responsible for the synthesis of L-tryptophan from indole and L-serine. This chain is Tryptophan synthase beta chain, found in Neisseria meningitidis serogroup B (strain ATCC BAA-335 / MC58).